The sequence spans 106 residues: Iron-sulfur cluster assembly protein CyaY (106 aa).

This sequence belongs to the frataxin family.

Its function is as follows. Involved in iron-sulfur (Fe-S) cluster assembly. May act as a regulator of Fe-S biogenesis. In Klebsiella pneumoniae subsp. pneumoniae (strain ATCC 700721 / MGH 78578), this protein is Iron-sulfur cluster assembly protein CyaY.